A 345-amino-acid chain; its full sequence is N-acetyl-gamma-glutamyl-phosphate reductase (345 aa).

Cysteine 149 is a catalytic residue.

It belongs to the NAGSA dehydrogenase family. Type 1 subfamily.

It localises to the cytoplasm. It catalyses the reaction N-acetyl-L-glutamate 5-semialdehyde + phosphate + NADP(+) = N-acetyl-L-glutamyl 5-phosphate + NADPH + H(+). Its pathway is amino-acid biosynthesis; L-arginine biosynthesis; N(2)-acetyl-L-ornithine from L-glutamate: step 3/4. Functionally, catalyzes the NADPH-dependent reduction of N-acetyl-5-glutamyl phosphate to yield N-acetyl-L-glutamate 5-semialdehyde. This Bacillus cereus (strain B4264) protein is N-acetyl-gamma-glutamyl-phosphate reductase.